A 370-amino-acid chain; its full sequence is Probable aspartic-type endopeptidase ARB_04018 (370 aa).

Positions 1–21 (MWHSPFSTAFTLFLGFFTLTL) are cleaved as a signal peptide. N-linked (GlcNAc...) asparagine glycans are attached at residues N80 and N102. The region spanning 94 to 367 (FVNEITIGND…DHDGPKMGFA (274 aa)) is the Peptidase A1 domain. Residue D110 is part of the active site. The N-linked (GlcNAc...) asparagine glycan is linked to N251. Residue D261 is part of the active site. N298 carries an N-linked (GlcNAc...) asparagine glycan.

It belongs to the peptidase A1 family.

It localises to the secreted. Its function is as follows. Probable aspartic-type endopeptidase which contributes to virulence. This chain is Probable aspartic-type endopeptidase ARB_04018, found in Arthroderma benhamiae (strain ATCC MYA-4681 / CBS 112371) (Trichophyton mentagrophytes).